The sequence spans 1257 residues: RAF-like serine/threonine-protein kinase 24 (1257 aa).

A disordered region spans residues 1-21; the sequence is MDQAKGYEHVRYTAPDPRDEG. One can recognise a PB1 domain in the interval 191–277; sequence PRDQKLRYVG…EKPRMFLFSS (87 aa). Basic and acidic residues-rich tracts occupy residues 457–480 and 493–502; these read VQDPETSSKEAKMRRDDSFQKVND and KEPKMRRESS. Disordered stretches follow at residues 457 to 629 and 761 to 789; these read VQDP…RTSQ and SQSEKKNVETNTPEHVSQTETSAKAVPQG. Serine 474 is subject to Phosphoserine. Positions 533 to 548 are enriched in low complexity; the sequence is TQTSSSTPDPSSSTLS. Basic and acidic residues predominate over residues 550-576; it reads KSLRKSEDHVENNLSAKEPKMRKEHST. A Phosphoserine modification is found at serine 555. The segment covering 583–593 has biased composition (low complexity); sequence SVSSVSSDSMV. Residues 769–782 are compositionally biased toward polar residues; it reads ETNTPEHVSQTETS. Serine 777 carries the phosphoserine modification. Residues 974–1239 form the Protein kinase domain; that stretch reads LEELKELGSG…PEIARRLRTM (266 aa). ATP contacts are provided by residues 980-988 and lysine 1001; that span reads LGSGTFGTV. A Phosphoserine modification is found at serine 1013. Aspartate 1102 serves as the catalytic Proton acceptor.

It belongs to the protein kinase superfamily. Ser/Thr protein kinase family. In terms of processing, hyperphosphorylated in response to auxin in an ABP1- and TMK1-dependent manner.

The protein localises to the cytoplasm. The enzyme catalyses L-seryl-[protein] + ATP = O-phospho-L-seryl-[protein] + ADP + H(+). It carries out the reaction L-threonyl-[protein] + ATP = O-phospho-L-threonyl-[protein] + ADP + H(+). With respect to regulation, activated by auxin via rapid phosphorylation downstream of ABP1 and TMK1 signaling. In terms of biological role, RAF-like protein kinase acting, together with RAF20, as a central mediator of a fast response pathway to auxin involving proteins phosphorylation, and leading to rapid cellular responses including membrane depolarization and cytoplasmic streaming. Required for general growth and developmental process. This Arabidopsis thaliana (Mouse-ear cress) protein is RAF-like serine/threonine-protein kinase 24.